Here is a 582-residue protein sequence, read N- to C-terminus: mRNA-decapping enzyme 1A (582 aa).

A Phosphoserine modification is found at serine 62. Residues 132–141 (RSQQAARDKQ) show a composition bias toward basic and acidic residues. Disordered stretches follow at residues 132-154 (RSQQAARDKQSPSQANGCSDHRP) and 172-214 (QMGD…PSGH). Residues serine 142, serine 179, serine 180, serine 315, serine 319, and serine 334 each carry the phosphoserine modification. The span at 173-196 (MGDSNISSPGLQPSTQLSNLGSTE) shows a compositional bias: polar residues. Position 348 is a phosphothreonine (threonine 348). The residue at position 353 (serine 353) is a Phosphoserine. Arginine 376 bears the Asymmetric dimethylarginine mark. At threonine 401 the chain carries Phosphothreonine. A phosphoserine mark is found at serine 422, serine 522, serine 523, and serine 525. The segment at 513–536 (RSSDLERKASSPSPLTIGTPESQR) is disordered. Polar residues predominate over residues 522-533 (SSPSPLTIGTPE). Residues threonine 528 and threonine 531 each carry the phosphothreonine modification.

It belongs to the DCP1 family. In terms of assembly, (Microbial infection) Interacts with rotavirus A non-structural protein 2; this interaction probably plays a role in the sequestration of DCP1A in viral factories. Interacts with rotavirus A non-structural protein 5; this interaction probably plays a role in its sequestration in viral factories. As to quaternary structure, forms a complex with EDC3, DCP2, DDX6 and EDC4/HEDLS, within this complex directly interacts with EDC3. Part of a cytoplasmic complex containing proteins involved in mRNA decay, including XRN1 and LSM1. Interacts with DCP1B. Interacts with DCP2. Interacts with DDX17 in an RNA-independent manner. Interacts with PNRC2. Interacts with SMAD4. Interacts with UPF1. Interacts with ZC3HAV1. Interacts with ZFP36L1. Interacts with NBDY. Interacts with DHX34; the interaction is RNA-independent. Detected in heart, brain, placenta, lung, skeletal muscle, liver, kidney and pancreas.

It localises to the cytoplasm. The protein localises to the P-body. Its subcellular location is the nucleus. The enzyme catalyses a 5'-end (N(7)-methyl 5'-triphosphoguanosine)-ribonucleoside in mRNA + H2O = N(7)-methyl-GDP + a 5'-end phospho-ribonucleoside in mRNA + 2 H(+). Necessary for the degradation of mRNAs, both in normal mRNA turnover and in nonsense-mediated mRNA decay. Removes the 7-methyl guanine cap structure from mRNA molecules, yielding a 5'-phosphorylated mRNA fragment and 7m-GDP. Contributes to the transactivation of target genes after stimulation by TGFB1. Essential for embryonic development. This is mRNA-decapping enzyme 1A (DCP1A) from Homo sapiens (Human).